A 427-amino-acid polypeptide reads, in one-letter code: Cholecystokinin receptor type A (427 aa).

Over 1 to 41 (MDAVASLLGNASGIPPPCELGLDNETLFCLDQPPPSKEWQP) the chain is Extracellular. 2 N-linked (GlcNAc...) asparagine glycosylation sites follow: N10 and N24. An intrachain disulfide couples C18 to C29. A helical membrane pass occupies residues 42–67 (AVQILLYSLIFLLSVLGNTLVITVLI). Topologically, residues 68–77 (RNKRMRTVTN) are cytoplasmic. Residues 78-104 (IFLLSLAISDLMLCLFCMPFNLIPNLL) traverse the membrane as a helical segment. Residues 105–115 (KDFIFGSALCK) lie on the Extracellular side of the membrane. Residues C114 and C196 are joined by a disulfide bond. A helical transmembrane segment spans residues 116–137 (TTTYLMGTSVSVSTLNLVAISL). The Cytoplasmic portion of the chain corresponds to 138–157 (ERYGAICKPLQSRVWQTKSH). The chain crosses the membrane as a helical span at residues 158–178 (ALKVIAATWCLSFAIMTPYPI). Residues 179-210 (YSNLVPFTKTNNQTANMCRFLLPSDVMQQAWH) are Extracellular-facing. A glycan (N-linked (GlcNAc...) asparagine) is linked at N190. Residues 211-234 (TFLLLILFLIPGIVMMVAYGMISL) form a helical membrane-spanning segment. Residues 235-312 (ELYQGIKFDA…TLMAKKRVIR (78 aa)) lie on the Cytoplasmic side of the membrane. The helical transmembrane segment at 313–333 (MLMVIVVLFFLCWMPIFSANA) threads the bilayer. Residues 334–348 (WRAYDTVSAERRLSG) are Extracellular-facing. Residues 349-372 (TPISFILLLSYTSSCVNPIIYCFM) traverse the membrane as a helical segment. The Cytoplasmic segment spans residues 373-427 (NRRFRLGFMATFPCCPNPGPPGPRAEAGEEEEGRTTRASLSRYSYSHMSASAPPS). The S-palmitoyl cysteine moiety is linked to residue C386. The tract at residues 391–427 (GPPGPRAEAGEEEEGRTTRASLSRYSYSHMSASAPPS) is disordered. Positions 411 to 421 (SLSRYSYSHMS) are enriched in polar residues.

The protein belongs to the G-protein coupled receptor 1 family.

It is found in the cell membrane. Receptor for cholecystokinin. Mediates pancreatic growth and enzyme secretion, smooth muscle contraction of the gall bladder and stomach. Has a 1000-fold higher affinity for CCK rather than for gastrin. It modulates feeding and dopamine-induced behavior in the central and peripheral nervous system. This receptor mediates its action by association with G proteins that activate a phosphatidylinositol-calcium second messenger system. The chain is Cholecystokinin receptor type A (CCKAR) from Oryctolagus cuniculus (Rabbit).